Reading from the N-terminus, the 192-residue chain is NADH:FMN oxidoreductase (192 aa).

Residues 1-20 (MSDKPNAVSSHTTPDVPEVA) form a disordered region. Residues 60–63 (TATS), 77–84 (NIAETSSS), Ala111, and Arg117 contribute to the FMN site.

The protein belongs to the non-flavoprotein flavin reductase family.

The protein localises to the cytoplasm. It carries out the reaction FMNH2 + NAD(+) = FMN + NADH + 2 H(+). It functions in the pathway sulfur metabolism; dibenzothiophene degradation. In terms of biological role, an NADH:FMN oxidoreductase which supplies reduced FMN for the '4S' desulfurization pathway that removes covalently bound sulfur from dibenzothiophene (DBT) without breaking carbon-carbon bonds. Provides DszA and DszC (DBTO2-monooxygenase and DBT-monooxygenase respectively) with reduced flavin (FMN). The sequence is that of NADH:FMN oxidoreductase from Rhodococcus erythropolis (Arthrobacter picolinophilus).